A 271-amino-acid chain; its full sequence is Zinc finger protein 501 (271 aa).

C2H2-type zinc fingers lie at residues 22–44 (SKCS…QRIH), 50–72 (YVCS…LRIH), 78–100 (YKCN…LRIH), 106–128 (YKCN…QRIH), 134–156 (YKCA…QRSH), 162–184 (FKCN…QRIH), 190–212 (YTCT…ERTH), 218–240 (YKCS…YRIH), and 246–268 (YECF…QRLH).

It belongs to the krueppel C2H2-type zinc-finger protein family.

The protein localises to the nucleus. It is found in the nucleolus. Functionally, may be involved in transcriptional regulation. Essential for Golgi structural integrity. The protein is Zinc finger protein 501 (ZNF501) of Pongo abelii (Sumatran orangutan).